Consider the following 476-residue polypeptide: Protein transport protein Sec61 subunit alpha (476 aa).

Residues 2 to 33 are Cytoplasmic-facing; it reads GIKFLEFIKPFCAVLPEIQKPERKIQFREKVL. Residues 34-53 traverse the membrane as a helical segment; sequence WTAITLFIFLVCCQIPLFGI. Topologically, residues 54 to 76 are lumenal; the sequence is MSSDSADPFYWMRVILASNRGTL. The chain crosses the membrane as a helical span at residues 77–96; sequence MELGIAPIVTSGLIMQLLAG. The Cytoplasmic segment spans residues 97 to 117; it reads AKIIEVGDTPKDRALFNGAQK. Residues 118-138 form a helical membrane-spanning segment; that stretch reads LFGMIITIGQAIVYVMTGMYG. The Lumenal portion of the chain corresponds to 139–144; sequence DPSEMG. A helical transmembrane segment spans residues 145-165; it reads AGICLLIIIQLFVAGLIVLLL. Over 166-172 the chain is Cytoplasmic; sequence DELLQKG. A helical transmembrane segment spans residues 173 to 193; sequence YGLGSGISLFIATNICETIVW. The Lumenal segment spans residues 194 to 240; that stretch reads KAFGPTTVNTGRGTEFEGAIIALFHLLATRTDKVRALREAFYRQNLP. Residues 241-261 traverse the membrane as a helical segment; that stretch reads NLMNLIATVFVFAVVIYFQGF. At 262-288 the chain is on the cytoplasmic side; it reads RVDLPIKSARYRGQYNTYPIKLFYTSN. The helical transmembrane segment at 289–309 threads the bilayer; it reads IPIILQSALVSNLYVISQMLS. The Lumenal segment spans residues 310-354; sequence TRFSGNFLVNLLGTWSDATTSGPARAYPVAGLCYYLSPPESFGSV. A helical transmembrane segment spans residues 355 to 375; it reads LDDPVHAVIYIVFMLGSCAFF. Residues 376 to 420 are Cytoplasmic-facing; the sequence is SKTWIEVSGSSAKDVAKQLKEQQMVMRGHRETSMVHELNRYIPTA. A helical membrane pass occupies residues 421–441; it reads AAFGGLCIGGLSVMADFLGAI. At 442–445 the chain is on the lumenal side; it reads GSGT. The helical transmembrane segment at 446–462 threads the bilayer; the sequence is GILLAVTIIYQYFEIFV. Residues 463–476 lie on the Cytoplasmic side of the membrane; that stretch reads KEQSEVGSMGALLF.

This sequence belongs to the SecY/SEC61-alpha family. As to quaternary structure, the SEC61 channel-forming translocon complex consists of channel-forming core components SEC61A1, SEC61B and SEC61G and different auxiliary components such as SEC62 and SEC63. The SEC61 channel associates with the multi-pass translocon (MPT) complex.

The protein resides in the endoplasmic reticulum membrane. Functionally, component of SEC61 channel-forming translocon complex that mediates transport of signal peptide-containing precursor polypeptides across the endoplasmic reticulum (ER). Forms a ribosome receptor and a gated pore in the ER membrane, both functions required for cotranslational translocation of nascent polypeptides. May cooperate with auxiliary protein SEC62, SEC63 and HSPA5/BiP to enable post-translational transport of small presecretory proteins. The SEC61 channel is also involved in ER membrane insertion of transmembrane proteins: it mediates membrane insertion of the first few transmembrane segments of proteins, while insertion of subsequent transmembrane regions of multi-pass membrane proteins is mediated by the multi-pass translocon (MPT) complex. The chain is Protein transport protein Sec61 subunit alpha (sec61a) from Bovichtus variegatus (Thornfish).